Here is a 312-residue protein sequence, read N- to C-terminus: MARTRSDSLAAGGLNWDSLPLRLFAGGNAKFWDPADIDFSRDRADWESLTDLERDWATRLCAEFIAGEEAVTQDIQPFMAAMRAEGRLGDEMYLTQFAFEEAKHTQVFRMWLDAVGITEDLQGYLDELPAYCQMFYEELPASLDALATDPSPAAQVRASVTYNHVIEGMMALTGYYAWHRICVDRGILPGMQELVRRIGDDERRHMAWGTFTCRRHVAADDANWAVFETRMNELIPLALRNTEDGFALYDEVPFGLTMEEFQQYAADKGMRRFGTISSARGRPLAEIDVDYSPLHLEDTFADEDRKSLAASA.

Mn(2+)-binding residues include Glu68, Glu101, and His104. Positions Val71 to Tyr162 form a cross-link, 3-(O4'-tyrosyl)-valine (Val-Tyr). Glu101 is a binding site for Fe cation. Residues Glu167, Glu202, and His205 each coordinate Fe cation.

This sequence belongs to the ribonucleoside diphosphate reductase small chain family. R2-like ligand binding oxidase subfamily. In terms of assembly, homodimer. Requires Fe cation as cofactor. It depends on Mn(2+) as a cofactor.

In terms of biological role, probable oxidase that might be involved in lipid metabolism. This is R2-like ligand binding oxidase from Mycolicibacterium vanbaalenii (strain DSM 7251 / JCM 13017 / BCRC 16820 / KCTC 9966 / NRRL B-24157 / PYR-1) (Mycobacterium vanbaalenii).